A 360-amino-acid polypeptide reads, in one-letter code: DAZ-associated protein 1 (360 aa).

RRM domains are found at residues G10–P97 and N114–P191. Disordered regions lie at residues H73–I116 and V184–F345. 2 stretches are compositionally biased toward basic and acidic residues: residues Q91–R112 and V184–K195. Over residues G203–S231 the composition is skewed to polar residues. A compositionally biased stretch (gly residues) spans T242–G253. Over residues G271–D301 the composition is skewed to pro residues. Positions Q328–F345 are enriched in polar residues.

As to quaternary structure, component of a mRNP complex, at least composed of DAZAP1, IGF2BP3-A, STAU and VgRBP60. Binds to the 3'-UTR of Vg1 mRNA. Interacts with profilin, a protein involved in actin assembly. Interacts with VgRBP71. As to expression, expressed in oocytes.

Its subcellular location is the cytoplasm. Functionally, RNA-binding protein, which is required during gametogenesis. May be involved in the actin-dependent anchoring of Vg1 mRNA in the vegetal cortex of the oocyte. The protein is DAZ-associated protein 1 (dazap1) of Xenopus laevis (African clawed frog).